A 517-amino-acid polypeptide reads, in one-letter code: Xyloglucan galactosyltransferase XLT2 (517 aa).

The tract at residues 1–31 (MLPVSNPSSPEHLLKKSRTPDSTTSIDRKNS) is disordered. At 1–49 (MLPVSNPSSPEHLLKKSRTPDSTTSIDRKNSFNSLHSVGNRSSYIAASR) the chain is on the cytoplasmic side. Positions 20 to 31 (PDSTTSIDRKNS) are enriched in polar residues. Residues 50–70 (SHCTWLILSLLSLQLILFLTL) form a helical; Signal-anchor for type II membrane protein membrane-spanning segment. Residues 71–517 (RSIPFPHRHI…KEQEKWYKWR (447 aa)) are Lumenal-facing. Asparagine 250, asparagine 288, asparagine 377, and asparagine 449 each carry an N-linked (GlcNAc...) asparagine glycan.

It belongs to the glycosyltransferase 47 family. As to quaternary structure, interacts with CSLC4, FUT1, XXT2 and XXT5. Expressed in roots, hypocotyls, cotyledons, leaves, stems and flowers.

The protein resides in the golgi apparatus membrane. In terms of biological role, functions in xyloglucan synthesis by adding side chains to the xylosylated glucan backbone. Involved in galactosylating hemicellulose xyloglucan (XyG) at the second position of the XXXG motif to form XLXG. Associates with other xyloglucan-synthesizing enzymes to form multiprotein complexes for xyloglucan synthesis in the Golgi. This chain is Xyloglucan galactosyltransferase XLT2, found in Arabidopsis thaliana (Mouse-ear cress).